The sequence spans 179 residues: Inner membrane-spanning protein YciB (179 aa).

The next 5 helical transmembrane spans lie at T24–E44, A49–H69, W76–L96, V121–F141, and L151–H171.

It belongs to the YciB family.

Its subcellular location is the cell inner membrane. Its function is as follows. Plays a role in cell envelope biogenesis, maintenance of cell envelope integrity and membrane homeostasis. The sequence is that of Inner membrane-spanning protein YciB from Variovorax paradoxus (strain S110).